The chain runs to 67 residues: DNA-directed RNA polymerase subunit omega (67 aa).

This sequence belongs to the RNA polymerase subunit omega family. As to quaternary structure, the RNAP catalytic core consists of 2 alpha, 1 beta, 1 beta' and 1 omega subunit. When a sigma factor is associated with the core the holoenzyme is formed, which can initiate transcription.

The catalysed reaction is RNA(n) + a ribonucleoside 5'-triphosphate = RNA(n+1) + diphosphate. In terms of biological role, promotes RNA polymerase assembly. Latches the N- and C-terminal regions of the beta' subunit thereby facilitating its interaction with the beta and alpha subunits. The sequence is that of DNA-directed RNA polymerase subunit omega from Methylibium petroleiphilum (strain ATCC BAA-1232 / LMG 22953 / PM1).